A 459-amino-acid chain; its full sequence is Hepatocyte nuclear factor 3-beta (459 aa).

A transactivation domain 1 region spans residues 14-93 (DWSSYYAEPE…AGAMAGMSGS (80 aa)). Positions 106–113 (LSPSLSPL) match the Nuclear localization signal motif. At threonine 156 the chain carries Phosphothreonine. Residues 159 to 252 (KPPYSYISLI…FENGCYLRRQ (94 aa)) constitute a DNA-binding region (fork-head). Serine 212 carries the post-translational modification Phosphoserine. A compositionally biased stretch (low complexity) spans 268 to 281 (GAASSGGKKTAPGS). Positions 268–366 (GAASSGGKKT…PGLPPEAHLK (99 aa)) are disordered. Serine 284 carries the phosphoserine modification. Over residues 295 to 311 (ASETPAGTESPHSSASP) the composition is skewed to polar residues. At threonine 302 the chain carries Phosphothreonine. Serine 304, serine 307, serine 308, and serine 310 each carry phosphoserine. A compositionally biased stretch (low complexity) spans 340–353 (PGQQQQAAAHLLGP). The tract at residues 362-459 (EAHLKPEHHY…VYSRPIMNSS (98 aa)) is transactivation domain 2. Phosphoserine is present on residues serine 438 and serine 459.

In terms of assembly, binds DNA as a monomer. Binds TLE1. Interacts with FOXA1 and FOXA3. Interacts with PRKDC. Interacts with AKT1. Interacts with TET1; this interaction may recruit TET1 to specific genomic loci to mediate their demethylation. Phosphorylation on Thr-156 abolishes binding to target promoters and subsequent transcription activation upon insulin stimulation. In terms of tissue distribution, restricted mainly to endoderm-derived tissues (lung, liver, stomach, and small intestine). Expressed in epididymis with region-specific expression pattern: no expression is observed in initial segment, low expression in proximal caput, gradiently higher levels of expression in middle and distal caput and highest level in corpus and cauda (at protein level).

It localises to the nucleus. It is found in the cytoplasm. In terms of biological role, transcription factor that is involved in embryonic development, establishment of tissue-specific gene expression and regulation of gene expression in differentiated tissues. Is thought to act as a 'pioneer' factor opening the compacted chromatin for other proteins through interactions with nucleosomal core histones and thereby replacing linker histones at target enhancer and/or promoter sites. Binds DNA with the consensus sequence 5'-[AC]A[AT]T[AG]TT[GT][AG][CT]T[CT]-3'. In embryonic development is required for notochord formation. Involved in the development of multiple endoderm-derived organ systems such as the liver, pancreas and lungs; Foxa1 and Foxa2 seem to have at least in part redundant roles. FOXA1 and FOXA2 are essential for hepatic specification. FOXA1 and FOXA2 are required for morphogenesis and cell differentiation during formation of the lung. FOXA1 and FOXA2 are involved in bile duct formation; they positively regulate the binding glucocorticoid receptor/NR3C1 to the IL6 promoter. FOXA1 and FOXA2 regulate multiple phases of midbrain dopaminergic neuron development; they regulate expression of NEUROG2 at the beginning of mDA neurogenesis and of NR4A2 and EN1 in immature mDA neurons. Modulates the transcriptional activity of nuclear hormone receptors; inhibits AR-mediated transcription from the LCN5 promoter. Binds to fibrinogen beta promoter and is involved in IL6-induced fibrinogen beta transcriptional activation. Originally described as a transcription activator for a number of liver genes such as AFP, albumin, tyrosine aminotransferase, PEPCK, etc. Interacts with the cis-acting regulatory regions of these genes. Involved in glucose homeostasis; regulates the expression of genes important for glucose sensing in pancreatic beta-cells and glucose homeostasis. In pancreatic beta cells activates transcription of potassium channel subunits KCNJ11 and ABCC8. Involved in regulation of fat metabolism; activates transcriptional programs of lipid metabolism and ketogenesis at low insulin state. Involved in transcriptional regulation of MUC2 in the intestine. This Mus musculus (Mouse) protein is Hepatocyte nuclear factor 3-beta (Foxa2).